Reading from the N-terminus, the 166-residue chain is MLVPAPFLLVLLLLLGAPQVGLSQRSPKAGSSPSCLHTALREAEKSQRKDTSLLIKRTFPALPRGDPEDQEGQEEEDTEKRTFPGSVGGGGGGGAGSTRYKYPSQAQFQGRPSQDKAKSDRRTKVTLSLDVPTNIMNILFNIAKAKNLRAKAAANAHLMAQIGRKK.

An N-terminal signal peptide occupies residues methionine 1–serine 23. A propeptide spanning residues glutamine 24–threonine 123 is cleaved from the precursor. Residues arginine 41–threonine 51 show a composition bias toward basic and acidic residues. The tract at residues arginine 41–threonine 123 is disordered. Residues glutamate 68–aspartate 77 show a composition bias toward acidic residues. A compositionally biased stretch (gly residues) spans serine 86–glycine 96. The span at serine 113 to threonine 123 shows a compositional bias: basic and acidic residues. Isoleucine 162 carries the isoleucine amide modification.

Belongs to the sauvagine/corticotropin-releasing factor/urotensin I family. In terms of assembly, binds with high affinity to CRF receptors 2-alpha and 2-beta.

The protein localises to the secreted. Its function is as follows. Suppresses food intake, delays gastric emptying and decreases heat-induced edema. Might represent an endogenous ligand for maintaining homeostasis after stress. This Bos taurus (Bovine) protein is Urocortin-3 (UCN3).